The primary structure comprises 542 residues: Heterogeneous nuclear ribonucleoprotein L-like (542 aa).

The interval 1 to 71 (MSSSSSSPRE…QPEAGGSHHK (71 aa)) is disordered. Residues 18–29 (YESQAKRLKTEE) are compositionally biased toward basic and acidic residues. A Glycyl lysine isopeptide (Lys-Gly) (interchain with G-Cter in SUMO2) cross-link involves residue Lys26. A Phosphoserine modification is found at Ser35. Thr46 bears the Phosphothreonine mark. Gly residues predominate over residues 48 to 58 (RGGGDGGGGGR). Ser59, Ser68, and Ser75 each carry phosphoserine. 3 RRM domains span residues 76–150 (PVVH…YSTS), 166–244 (NKVL…YARP), and 335–409 (SVVM…VSKQ). Lys491 participates in a covalent cross-link: Glycyl lysine isopeptide (Lys-Gly) (interchain with G-Cter in SUMO2).

In terms of assembly, interacts with HNRNPL. Widely expressed. Detected in bone marrow stroma cells, skeletal muscle, heart, placenta, pancreas, kidney and lung.

In terms of biological role, RNA-binding protein that functions as a regulator of alternative splicing for multiple target mRNAs, including PTPRC/CD45 and STAT5A. Required for alternative splicing of PTPRC. The protein is Heterogeneous nuclear ribonucleoprotein L-like (HNRNPLL) of Homo sapiens (Human).